The following is a 908-amino-acid chain: Zinc finger and BTB domain-containing protein 41 (908 aa).

The tract at residues 38–59 (TQAPERPTPEAAQRCQELPPSP) is disordered. The 65-residue stretch at 89-153 (CDLLIIVEGK…LYTSEFFVYK (65 aa)) folds into the BTB domain. The C2H2-type 1 zinc-finger motif lies at 208-231 (HQCKFCSRHFCYKKSLENHLAKTH). The span at 252-261 (RRSKRNRKCP) shows a compositional bias: basic residues. The interval 252 to 344 (RRSKRNRKCP…EAGDSAGSIH (93 aa)) is disordered. Positions 267–276 (TSDDEQESGD) are enriched in acidic residues. The segment covering 279–296 (DNLHQESSEKERSDRNDS) has biased composition (basic and acidic residues). Residues 297–336 (EDPGSEYNAEDEELEEEVSDEDSDTEQSDKDNDAEEEPEA) show a composition bias toward acidic residues. 13 C2H2-type zinc fingers span residues 360 to 382 (LQCP…TRVH), 388 to 410 (FECD…RKKH), 421 to 444 (HKCP…KRFH), 462 to 484 (WKCD…MILH), 490 to 513 (FKCT…EKFH), 517 to 540 (FPCD…ECTH), 546 to 568 (WTCF…LRIH), 574 to 596 (HLCS…LRVH), 602 to 624 (YECD…KKIH), 630 to 653 (HQCE…KSVH), 667 to 689 (HQCD…FRTH), 695 to 717 (YKCQ…LVIH), and 723 to 746 (FNCQ…DHVH).

It localises to the nucleus. May be involved in transcriptional regulation. The chain is Zinc finger and BTB domain-containing protein 41 (Zbtb41) from Mus musculus (Mouse).